The following is a 452-amino-acid chain: Retinoid-inducible serine carboxypeptidase (452 aa).

Residues 1–28 (MELSRRICLVRLWLLLLSFLLGFSAGSA) form the signal peptide. 3 N-linked (GlcNAc...) asparagine glycosylation sites follow: asparagine 64, asparagine 102, and asparagine 126. Residue serine 167 is part of the active site. Residues asparagine 192 and asparagine 362 are each glycosylated (N-linked (GlcNAc...) asparagine). Residues aspartate 371 and histidine 431 contribute to the active site.

Belongs to the peptidase S10 family.

Its subcellular location is the secreted. Its function is as follows. May be involved in vascular wall and kidney homeostasis. This chain is Retinoid-inducible serine carboxypeptidase (Scpep1), found in Mus musculus (Mouse).